Consider the following 160-residue polypeptide: Sec-independent protein translocase protein TatB (160 aa).

A helical transmembrane segment spans residues 1-21; the sequence is MFGMGFFEILVVLVVAIIFLG. The segment at 118 to 160 is disordered; it reads HLNEEVSNEEALNKEVSSDESPKEVQLATDNNTKEHDKEKENV. Composition is skewed to basic and acidic residues over residues 128–140 and 149–160; these read ALNK…ESPK and NTKEHDKEKENV.

This sequence belongs to the TatB family. In terms of assembly, the Tat system comprises two distinct complexes: a TatABC complex, containing multiple copies of TatA, TatB and TatC subunits, and a separate TatA complex, containing only TatA subunits. Substrates initially bind to the TatABC complex, which probably triggers association of the separate TatA complex to form the active translocon.

Its subcellular location is the cell inner membrane. In terms of biological role, part of the twin-arginine translocation (Tat) system that transports large folded proteins containing a characteristic twin-arginine motif in their signal peptide across membranes. Together with TatC, TatB is part of a receptor directly interacting with Tat signal peptides. TatB may form an oligomeric binding site that transiently accommodates folded Tat precursor proteins before their translocation. The sequence is that of Sec-independent protein translocase protein TatB from Helicobacter pylori (strain ATCC 700392 / 26695) (Campylobacter pylori).